A 187-amino-acid polypeptide reads, in one-letter code: Coiled-coil domain-containing protein 201 (187 aa).

Disordered stretches follow at residues 1–79 and 92–159; these read MEPG…PPAT and KESS…RAAA. The stretch at 111 to 131 forms a coiled coil; the sequence is LTQRQRQRQQQQQQQESLRAK. Residues 147–157 show a composition bias toward basic residues; the sequence is GRKRRDPKKRA.

This Homo sapiens (Human) protein is Coiled-coil domain-containing protein 201.